We begin with the raw amino-acid sequence, 307 residues long: uncharacterized protein (307 aa).

The chain crosses the membrane as a helical span at residues 12-34; it reads LLAFLLALIMIGSVFAYMLSGGS.

The protein resides in the membrane. This is an uncharacterized protein from Archaeoglobus fulgidus (strain ATCC 49558 / DSM 4304 / JCM 9628 / NBRC 100126 / VC-16).